Here is a 251-residue protein sequence, read N- to C-terminus: Probable ATP-dependent transporter ycf16 (251 aa).

The ABC transporter domain occupies 8-250 (LEIKNLKACI…ELESKGYEWL (243 aa)). Position 40–47 (40–47 (GPNGSGKS)) interacts with ATP.

Belongs to the ABC transporter superfamily. Ycf16 family.

The protein resides in the plastid. It localises to the chloroplast. In Trieres chinensis (Marine centric diatom), this protein is Probable ATP-dependent transporter ycf16 (ycf16).